We begin with the raw amino-acid sequence, 308 residues long: Cytochrome b (308 aa).

A run of 4 helical transmembrane segments spans residues 1-21 (FGSL…LLAM), 45-66 (WLIR…YFHI), 81-101 (WNIG…GYVL), and 146-166 (FFAL…VHLT). Residues His51 and His65 each contribute to the heme b site. Residues His150 and His164 each contribute to the heme b site. Residue His169 participates in a ubiquinone binding. A run of 3 helical transmembrane segments spans residues 194 to 214 (TKDI…ALFS), 256 to 276 (LGGV…PLLH), and 288 to 308 (LSQI…WVGS).

Belongs to the cytochrome b family. In terms of assembly, the cytochrome bc1 complex contains 11 subunits: 3 respiratory subunits (MT-CYB, CYC1 and UQCRFS1), 2 core proteins (UQCRC1 and UQCRC2) and 6 low-molecular weight proteins (UQCRH/QCR6, UQCRB/QCR7, UQCRQ/QCR8, UQCR10/QCR9, UQCR11/QCR10 and a cleavage product of UQCRFS1). This cytochrome bc1 complex then forms a dimer. Heme b is required as a cofactor.

The protein resides in the mitochondrion inner membrane. Its function is as follows. Component of the ubiquinol-cytochrome c reductase complex (complex III or cytochrome b-c1 complex) that is part of the mitochondrial respiratory chain. The b-c1 complex mediates electron transfer from ubiquinol to cytochrome c. Contributes to the generation of a proton gradient across the mitochondrial membrane that is then used for ATP synthesis. This chain is Cytochrome b (MT-CYB), found in Baeolophus inornatus (Oak titmouse).